Reading from the N-terminus, the 378-residue chain is MTDSPVLALAKDLISRQSVTPEDAGCQDVMIERLKALGFEIEVMVFEDTTNFWARRGTEAPLFAFAGHTDVVPAGKLEQWDTHPFEPTIIDGYLHGRGAADMKGSLACMVVAVERFIAENPDHKGSIGFLITSDEEGPFINGTVRVVETLMDRGENIDMCIVGEPSSTEVVGDVVKNGRRGSITGDLTVKGTQGHVAYPHLANNPVHQSLMAIHELATTEWDQGNDYFPPTSFQIPNVSAGTGASNVIPGEFNVQFNLRFSTELSNEVIVQRITETLDKHELDYDLKWTFNGDPFLTDTGALLDAVVAAVDEVNSTKPALLTTGGTSDGRFIARMGGQVVELGPVNATIHKVNECVKVDDLEKLTDMYENTLKHLLAK.

A Zn(2+)-binding site is contributed by His68. The active site involves Asp70. Asp101 is a Zn(2+) binding site. Glu135 (proton acceptor) is an active-site residue. Residues Glu136, Glu164, and His350 each coordinate Zn(2+).

Belongs to the peptidase M20A family. DapE subfamily. As to quaternary structure, homodimer. Requires Zn(2+) as cofactor. Co(2+) is required as a cofactor.

The enzyme catalyses N-succinyl-(2S,6S)-2,6-diaminopimelate + H2O = (2S,6S)-2,6-diaminopimelate + succinate. Its pathway is amino-acid biosynthesis; L-lysine biosynthesis via DAP pathway; LL-2,6-diaminopimelate from (S)-tetrahydrodipicolinate (succinylase route): step 3/3. In terms of biological role, catalyzes the hydrolysis of N-succinyl-L,L-diaminopimelic acid (SDAP), forming succinate and LL-2,6-diaminopimelate (DAP), an intermediate involved in the bacterial biosynthesis of lysine and meso-diaminopimelic acid, an essential component of bacterial cell walls. In Vibrio campbellii (strain ATCC BAA-1116), this protein is Succinyl-diaminopimelate desuccinylase.